A 492-amino-acid chain; its full sequence is Aspartyl/glutamyl-tRNA(Asn/Gln) amidotransferase subunit B (492 aa).

The protein belongs to the GatB/GatE family. GatB subfamily. Heterotrimer of A, B and C subunits.

It catalyses the reaction L-glutamyl-tRNA(Gln) + L-glutamine + ATP + H2O = L-glutaminyl-tRNA(Gln) + L-glutamate + ADP + phosphate + H(+). The enzyme catalyses L-aspartyl-tRNA(Asn) + L-glutamine + ATP + H2O = L-asparaginyl-tRNA(Asn) + L-glutamate + ADP + phosphate + 2 H(+). In terms of biological role, allows the formation of correctly charged Asn-tRNA(Asn) or Gln-tRNA(Gln) through the transamidation of misacylated Asp-tRNA(Asn) or Glu-tRNA(Gln) in organisms which lack either or both of asparaginyl-tRNA or glutaminyl-tRNA synthetases. The reaction takes place in the presence of glutamine and ATP through an activated phospho-Asp-tRNA(Asn) or phospho-Glu-tRNA(Gln). This is Aspartyl/glutamyl-tRNA(Asn/Gln) amidotransferase subunit B from Bradyrhizobium sp. (strain BTAi1 / ATCC BAA-1182).